The following is a 206-amino-acid chain: Pyrrolidone-carboxylate peptidase 2 (206 aa).

Catalysis depends on residues glutamate 78, cysteine 141, and histidine 165.

This sequence belongs to the peptidase C15 family. As to quaternary structure, homotetramer.

The protein resides in the cytoplasm. It catalyses the reaction Release of an N-terminal pyroglutamyl group from a polypeptide, the second amino acid generally not being Pro.. Functionally, removes 5-oxoproline from various penultimate amino acid residues except L-proline. This chain is Pyrrolidone-carboxylate peptidase 2, found in Caldanaerobacter subterraneus subsp. tengcongensis (strain DSM 15242 / JCM 11007 / NBRC 100824 / MB4) (Thermoanaerobacter tengcongensis).